Consider the following 723-residue polypeptide: Threonine--tRNA ligase 1, cytoplasmic (723 aa).

The segment covering 1-10 (MSEEQASSPS) has biased composition (polar residues). The tract at residues 1-49 (MSEEQASSPSAKMGDEEKPVGAGEEKQKEGSKKKNKEGSGDGGRAELNP) is disordered. Residues 13 to 39 (MGDEEKPVGAGEEKQKEGSKKKNKEGS) are compositionally biased toward basic and acidic residues. Residue serine 39 is modified to Phosphoserine. Positions 79-143 (DSKPIKVTLP…EEDCTLELLK (65 aa)) constitute a TGS domain. Lysine 243 is subject to N6-acetyllysine. A Phosphothreonine modification is found at threonine 246. At tyrosine 298 the chain carries Phosphotyrosine. Residue threonine 453 is modified to Phosphothreonine. Position 702 is a phosphoserine (serine 702).

Belongs to the class-II aminoacyl-tRNA synthetase family. Homodimer. Post-translationally, ISGylated.

The protein resides in the cytoplasm. The enzyme catalyses tRNA(Thr) + L-threonine + ATP = L-threonyl-tRNA(Thr) + AMP + diphosphate + H(+). Its function is as follows. Catalyzes the attachment of threonine to tRNA(Thr) in a two-step reaction: threonine is first activated by ATP to form Thr-AMP and then transferred to the acceptor end of tRNA(Thr). Also edits incorrectly charged tRNA(Thr) via its editing domain, at the post-transfer stage. The protein is Threonine--tRNA ligase 1, cytoplasmic (TARS1) of Bos taurus (Bovine).